The sequence spans 323 residues: Solute carrier family 35 member B1 (323 aa).

A run of 8 helical transmembrane segments spans residues 15–35 (LVCF…QETI), 51–71 (FALS…KLLI), 85–105 (WLYA…NSAL), 136–156 (YPLS…LFMY), 169–189 (TFGY…LTGV), 205–225 (MMLY…VFTG), 253–273 (LGQT…CSII), and 286–306 (VILF…LVFL). A Di-lysine motif motif is present at residues 319–323 (KKPSH).

This sequence belongs to the nucleotide-sugar transporter family. SLC35B subfamily.

It localises to the endoplasmic reticulum membrane. In terms of biological role, probable sugar transporter. This is Solute carrier family 35 member B1 (slc35b1) from Xenopus tropicalis (Western clawed frog).